Here is a 172-residue protein sequence, read N- to C-terminus: Allergen Bos d 2 (172 aa).

A signal peptide spans Met-1–Ala-16. The residue at position 17 (Gln-17) is a Pyrrolidone carboxylic acid. 2 disulfides stabilise this stretch: Cys-60-Cys-64 and Cys-79-Cys-170.

Belongs to the calycin superfamily. Lipocalin family. Found exclusively in skin. Produced in sweat glands and transported to the skin surface.

Its subcellular location is the secreted. Functionally, probable pheromone carrier. This Bos taurus (Bovine) protein is Allergen Bos d 2.